A 191-amino-acid polypeptide reads, in one-letter code: Pyridoxal 5'-phosphate synthase subunit PdxT (191 aa).

46–48 (GES) is an L-glutamine binding site. Catalysis depends on Cys-78, which acts as the Nucleophile. Residues Arg-105 and 134–135 (IR) contribute to the L-glutamine site. Residues His-170 and Glu-172 each act as charge relay system in the active site.

This sequence belongs to the glutaminase PdxT/SNO family. In terms of assembly, in the presence of PdxS, forms a dodecamer of heterodimers. Only shows activity in the heterodimer.

The enzyme catalyses aldehydo-D-ribose 5-phosphate + D-glyceraldehyde 3-phosphate + L-glutamine = pyridoxal 5'-phosphate + L-glutamate + phosphate + 3 H2O + H(+). The catalysed reaction is L-glutamine + H2O = L-glutamate + NH4(+). Its pathway is cofactor biosynthesis; pyridoxal 5'-phosphate biosynthesis. Functionally, catalyzes the hydrolysis of glutamine to glutamate and ammonia as part of the biosynthesis of pyridoxal 5'-phosphate. The resulting ammonia molecule is channeled to the active site of PdxS. This Carboxydothermus hydrogenoformans (strain ATCC BAA-161 / DSM 6008 / Z-2901) protein is Pyridoxal 5'-phosphate synthase subunit PdxT.